A 182-amino-acid chain; its full sequence is COP9 signalosome complex subunit 8 (182 aa).

The 167-residue stretch at 1–167 (MHLNKYSEVV…QEAPPARGND (167 aa)) folds into the PCI domain.

It belongs to the CSN8 family. Essential component of the CSN complex, probably composed of CSN1b, alien/CSN2, CSN3, CSN4, CSN5, CSN6, CSN7 and CSN8.

It localises to the cytoplasm. The protein localises to the nucleus. Functionally, probable component of the COP9 signalosome complex (CSN), a complex involved in various cellular and developmental processes. The CSN complex is an essential regulator of the ubiquitin (Ubl) conjugation pathway by mediating the deneddylation of the cullin subunits of the SCF-type E3 ligase complexes, leading to decrease the Ubl ligase activity of SCF. The CSN complex plays an essential role in oogenesis and embryogenesis and is required for proper photoreceptor R cell differentiation and promote lamina glial cell migration or axon targeting. It also promotes Ubl-dependent degradation of cyclin E (CycE) during early oogenesis. In Drosophila melanogaster (Fruit fly), this protein is COP9 signalosome complex subunit 8 (CSN8).